Consider the following 240-residue polypeptide: Transposase for insertion sequence element IS3411 (240 aa).

An Integrase catalytic domain is found at 125-240 (VAERPDQLWV…RASMVFTKRR (116 aa)).

Functionally, involved in the transposition of the insertion sequence. The sequence is that of Transposase for insertion sequence element IS3411 from Escherichia coli.